Reading from the N-terminus, the 255-residue chain is Hydroxyacylglutathione hydrolase (255 aa).

Zn(2+) is bound by residues H56, H58, D60, H61, H114, D133, and H171.

The protein belongs to the metallo-beta-lactamase superfamily. Glyoxalase II family. As to quaternary structure, monomer. The cofactor is Zn(2+).

The enzyme catalyses an S-(2-hydroxyacyl)glutathione + H2O = a 2-hydroxy carboxylate + glutathione + H(+). The protein operates within secondary metabolite metabolism; methylglyoxal degradation; (R)-lactate from methylglyoxal: step 2/2. Its function is as follows. Thiolesterase that catalyzes the hydrolysis of S-D-lactoyl-glutathione to form glutathione and D-lactic acid. The sequence is that of Hydroxyacylglutathione hydrolase from Chelativorans sp. (strain BNC1).